A 189-amino-acid polypeptide reads, in one-letter code: Interferon alpha-21 (189 aa).

A signal peptide spans 1–23 (MALSFSLLMAVLVLSYKSICSLG). Cystine bridges form between Cys-24-Cys-122 and Cys-52-Cys-162.

Belongs to the alpha/beta interferon family.

The protein localises to the secreted. Its function is as follows. Produced by macrophages, IFN-alpha have antiviral activities. Interferon stimulates the production of two enzymes: a protein kinase and an oligoadenylate synthetase. This chain is Interferon alpha-21 (IFNA21), found in Homo sapiens (Human).